Consider the following 386-residue polypeptide: N-acetylneuraminate epimerase (386 aa).

An N-terminal signal peptide occupies residues M1–A29. 7 Kelch repeats span residues V51–N95, E97–N149, T151–Y186, N187–N232, L235–A284, Q306–D355, and V357–K386. E241 acts as the Proton acceptor in catalysis.

Belongs to the NanM family. Homodimer.

The protein localises to the periplasm. It catalyses the reaction N-acetyl-alpha-neuraminate = N-acetyl-beta-neuraminate. Converts alpha-N-acetylneuranimic acid (Neu5Ac) to the beta-anomer, accelerating the equilibrium between the alpha- and beta-anomers. Probably facilitates sialidase-negative bacteria to compete successfully for limited amounts of extracellular Neu5Ac, which is likely taken up in the beta-anomer. In addition, the rapid removal of sialic acid from solution might be advantageous to the bacterium to damp down host responses. The protein is N-acetylneuraminate epimerase of Salmonella typhimurium (strain LT2 / SGSC1412 / ATCC 700720).